The primary structure comprises 1975 residues: Cadherin-87A (1975 aa).

A signal peptide spans 1-17 (MKLPLGLLMICLGLTLA). Residues 18 to 1775 (KGETNLPPVF…AIVQDEFDLA (1758 aa)) lie on the Extracellular side of the membrane. Cadherin domains follow at residues 28–132 (TQTL…PPEF), 133–245 (QNTP…PPVF), 246–358 (QGSL…PPVF), 359–472 (NHKE…KPVF), 473–669 (EQES…PPVC), 670–774 (ESPL…VPNF), 775–878 (EQQS…DPYF), 879–998 (VPAT…PPRF), 999–1103 (NAPW…DPKF), 1104–1211 (SQSD…APVF), 1212–1318 (TRDV…KPEF), 1319–1431 (VIPA…RPEF), 1432–1553 (PDAS…PPVF), and 1554–1677 (EKPI…PPEE). N-linked (GlcNAc...) asparagine glycans are attached at residues asparagine 39, asparagine 77, and asparagine 203. N-linked (GlcNAc...) asparagine glycosylation occurs at asparagine 424. The segment at 535 to 560 (CHDNGESNRRERRDLNEDEHVEEDDG) is disordered. Positions 537–549 (DNGESNRRERRDL) are enriched in basic and acidic residues. Positions 550-560 (NEDEHVEEDDG) are enriched in acidic residues. 2 N-linked (GlcNAc...) asparagine glycosylation sites follow: asparagine 730 and asparagine 761. 10 N-linked (GlcNAc...) asparagine glycosylation sites follow: asparagine 1039, asparagine 1049, asparagine 1111, asparagine 1163, asparagine 1217, asparagine 1325, asparagine 1349, asparagine 1492, asparagine 1576, and asparagine 1691. Residues 1776 to 1796 (VAGLVALVIVLFVGVISFIVL) traverse the membrane as a helical segment. Over 1797–1975 (CCCLKHWNLS…DGDDAVAELI (179 aa)) the chain is Cytoplasmic. Polar residues predominate over residues 1887-1899 (YATIQPRNNQNRL). Residues 1887–1916 (YATIQPRNNQNRLTGGGGAGGGSMRSGGGA) form a disordered region. The segment covering 1900–1916 (TGGGGAGGGSMRSGGGA) has biased composition (gly residues).

It localises to the cell membrane. In terms of biological role, cadherins are calcium-dependent cell adhesion proteins. They preferentially interact with themselves in a homophilic manner in connecting cells. The chain is Cadherin-87A (Cad87A) from Drosophila melanogaster (Fruit fly).